The chain runs to 146 residues: Large ribosomal subunit protein uL15 (146 aa).

A compositionally biased stretch (basic and acidic residues) spans 1 to 13; that stretch reads MKLHELKAAEGSR. Residues 1–51 form a disordered region; that stretch reads MKLHELKAAEGSRKVRNRVGRGTSSGNGKTSGRGQKGQKARSGGGVRLGFE. Gly residues-rich tracts occupy residues 23–35 and 42–51; these read TSSGNGKTSGRGQ and SGGGVRLGFE.

Belongs to the universal ribosomal protein uL15 family. In terms of assembly, part of the 50S ribosomal subunit.

In terms of biological role, binds to the 23S rRNA. The polypeptide is Large ribosomal subunit protein uL15 (Streptococcus pyogenes serotype M1).